Reading from the N-terminus, the 192-residue chain is Adenine phosphoribosyltransferase 2 (192 aa).

Belongs to the purine/pyrimidine phosphoribosyltransferase family. Homodimer.

Its subcellular location is the cytoplasm. The enzyme catalyses AMP + diphosphate = 5-phospho-alpha-D-ribose 1-diphosphate + adenine. It participates in purine metabolism; AMP biosynthesis via salvage pathway; AMP from adenine: step 1/1. Functionally, catalyzes a salvage reaction resulting in the formation of AMP, that is energically less costly than de novo synthesis. May contribute to the recycling of adenine into adenylate nucleotides and the inactivation of cytokinins by phosphoribosylation. Possesses low activity toward adenine and cytokinins. The protein is Adenine phosphoribosyltransferase 2 (APT2) of Arabidopsis thaliana (Mouse-ear cress).